A 144-amino-acid chain; its full sequence is Fluoride-specific ion channel FluC (144 aa).

4 helical membrane passes run 7-27 (LIVM…SVAA), 33-53 (FIPW…IGFF), 71-91 (LFVM…SLQT), and 105-125 (VNVA…HITA). Na(+) contacts are provided by G79 and T82.

The protein belongs to the fluoride channel Fluc/FEX (TC 1.A.43) family.

It is found in the cell inner membrane. It carries out the reaction fluoride(in) = fluoride(out). With respect to regulation, na(+) is not transported, but it plays an essential structural role and its presence is essential for fluoride channel function. Functionally, fluoride-specific ion channel. Important for reducing fluoride concentration in the cell, thus reducing its toxicity. The chain is Fluoride-specific ion channel FluC from Gluconobacter oxydans (strain 621H) (Gluconobacter suboxydans).